Consider the following 932-residue polypeptide: UPF0182 protein Dred_1797 (932 aa).

The next 7 helical transmembrane spans lie at 11–31 (LVILAGALLFSLIGWGAGLYI), 53–73 (IGLRVLVGIIMFLLLLINLML), 118–138 (LTLAFTLLSMALGFLYSSSVA), 180–200 (ILASAIFLNIVLVALVYLVTD), 209–229 (IFRFPSARYHLSVLAALFFVI), 264–284 (YKALMILSLVTAIIIIANIFL), and 292–312 (YAIGGLLVTSILLGSVYPAII). Residues 861 to 883 (DRPQQGVPPATDQPAGQQPAPEK) form a disordered region.

The protein belongs to the UPF0182 family.

The protein resides in the cell membrane. This chain is UPF0182 protein Dred_1797, found in Desulforamulus reducens (strain ATCC BAA-1160 / DSM 100696 / MI-1) (Desulfotomaculum reducens).